The chain runs to 185 residues: Guanosine deaminase (185 aa).

In terms of domain architecture, CMP/dCMP-type deaminase spans 28–142; sequence DSDHKFLTQA…AAIAIGFDDF (115 aa). Zn(2+) is bound at residue His80. The Proton donor role is filled by Glu82. 2 residues coordinate Zn(2+): Cys110 and Cys113.

The protein belongs to the cytidine and deoxycytidylate deaminase family. As to expression, expressed in roots, leaves, flowers and siliques.

It localises to the cytoplasm. The protein localises to the nucleus. The enzyme catalyses guanosine + H2O + H(+) = xanthosine + NH4(+). Functionally, catalyzes the hydrolytic deamination of guanosine, producing xanthosine and ammonia. Deaminates exclusively guanosine and 2'-deoxyguanosine but no other aminated purines, pyrimidines, or pterines. Deamination of guanosine by GSDA is the only source of xanthosine production in Arabidopsis. This is Guanosine deaminase from Arabidopsis thaliana (Mouse-ear cress).